Consider the following 111-residue polypeptide: 4'-hydroxy-3'-methoxypropiophenone carrier protein ppsC (111 aa).

The disordered stretch occupies residues 1-21 (MSAQVMRPGTPQHEGQEFLSG).

The protein operates within secondary metabolite biosynthesis. 4'-hydroxy-3'-methoxypropiophenone carrier protein; part of the gene cluster that mediates the biosynthesis of 2,4'-dihydroxy-3'-methoxypropiophenone. The first step of the pathway is the conversion of acetate into acetyl-CoA by the acyl-CoA ligase ppsA. Acetyl-CoA is then used as a starter unit by the polyketide synthase ppsB and condensed with 4 malonyl-CoA unit to produce the pentaketide backbone. During polyketide extension, the polykedite chain is probably reduced and dehydrated by the KR and PT domains, respectively. O-methylation seems to be catalyzed by an unknown methyltransferase rather than by the CMeT domain of ppsB. Two hydroxylations and one further decarboxylation step catalyzed by yet unknown enzymes are then required to yield 4'-hydroxy-3'-methoxypropiophenone. PpsC functions as a carrier protein to transport 4'-hydroxy-3'-methoxypropiophenone to a specific cell compartment in which 4'-hydroxy-3'-methoxypropiophenone is hydroxylated to 2,4'-dihydroxy-3'-methoxypropiophenone by a still to be identified enzyme. The chain is 4'-hydroxy-3'-methoxypropiophenone carrier protein ppsC from Aspergillus oryzae (strain ATCC 42149 / RIB 40) (Yellow koji mold).